The following is a 270-amino-acid chain: Monofunctional glycosyltransferase (270 aa).

The segment covering 1–10 (MKRSQRMNNS) has biased composition (polar residues). Positions 1–36 (MKRSQRMNNSPERHSQYRNEPHYNTYYQPVGKPPKK) are disordered. Basic and acidic residues predominate over residues 11–21 (PERHSQYRNEP). Residues 42–62 (IFLRLFIIFVFIYALFIGLMY) form a helical membrane-spanning segment.

Belongs to the glycosyltransferase 51 family.

It is found in the cell membrane. It carries out the reaction [GlcNAc-(1-&gt;4)-Mur2Ac(oyl-L-Ala-gamma-D-Glu-L-Lys-D-Ala-D-Ala)](n)-di-trans,octa-cis-undecaprenyl diphosphate + beta-D-GlcNAc-(1-&gt;4)-Mur2Ac(oyl-L-Ala-gamma-D-Glu-L-Lys-D-Ala-D-Ala)-di-trans,octa-cis-undecaprenyl diphosphate = [GlcNAc-(1-&gt;4)-Mur2Ac(oyl-L-Ala-gamma-D-Glu-L-Lys-D-Ala-D-Ala)](n+1)-di-trans,octa-cis-undecaprenyl diphosphate + di-trans,octa-cis-undecaprenyl diphosphate + H(+). Its pathway is cell wall biogenesis; peptidoglycan biosynthesis. Peptidoglycan polymerase that catalyzes glycan chain elongation using lipid-linked disaccharide-pentapeptide as the substrate. This chain is Monofunctional glycosyltransferase, found in Staphylococcus haemolyticus (strain JCSC1435).